The sequence spans 112 residues: DNA-binding protein Mboo_1886 (112 aa).

This sequence belongs to the PDCD5 family.

This Methanoregula boonei (strain DSM 21154 / JCM 14090 / 6A8) protein is DNA-binding protein Mboo_1886.